The following is a 296-amino-acid chain: 4-diphosphocytidyl-2-C-methyl-D-erythritol kinase (296 aa).

Residue K22 is part of the active site. 105-115 provides a ligand contact to ATP; it reads PMGGGLGGGSS. D147 is a catalytic residue.

The protein belongs to the GHMP kinase family. IspE subfamily.

The enzyme catalyses 4-CDP-2-C-methyl-D-erythritol + ATP = 4-CDP-2-C-methyl-D-erythritol 2-phosphate + ADP + H(+). The protein operates within isoprenoid biosynthesis; isopentenyl diphosphate biosynthesis via DXP pathway; isopentenyl diphosphate from 1-deoxy-D-xylulose 5-phosphate: step 3/6. Catalyzes the phosphorylation of the position 2 hydroxy group of 4-diphosphocytidyl-2C-methyl-D-erythritol. The chain is 4-diphosphocytidyl-2-C-methyl-D-erythritol kinase from Photobacterium profundum (strain SS9).